The primary structure comprises 147 residues: MVHLTADEKAAVTALWSKVNVEDVGGEALGRLLVVYPWTQRFFDSFGDLSTPAAVMSNAKVKAHGKKVLNAFSDGMAHLDNLKGTFAKLSELHCDKLHVDPENFRLLGNVLVCVLAHHFGKQFTPQLQAAYQKVVAGVAAALAHKYH.

Positions 3–147 (HLTADEKAAV…VAAALAHKYH (145 aa)) constitute a Globin domain. Positions 64 and 93 each coordinate heme b.

Belongs to the globin family. In terms of assembly, heterotetramer of two delta chains and two alpha chains. In terms of tissue distribution, red blood cells.

The sequence is that of Hemoglobin subunit delta (HBD) from Carlito syrichta (Philippine tarsier).